Reading from the N-terminus, the 302-residue chain is Sulfate adenylyltransferase subunit 2 (302 aa).

The disordered stretch occupies residues 280-302 (RQGRLIDSDQSASMEQKKRQGYF).

It belongs to the PAPS reductase family. CysD subfamily. In terms of assembly, heterodimer composed of CysD, the smaller subunit, and CysN.

It carries out the reaction sulfate + ATP + H(+) = adenosine 5'-phosphosulfate + diphosphate. Its pathway is sulfur metabolism; hydrogen sulfide biosynthesis; sulfite from sulfate: step 1/3. In terms of biological role, with CysN forms the ATP sulfurylase (ATPS) that catalyzes the adenylation of sulfate producing adenosine 5'-phosphosulfate (APS) and diphosphate, the first enzymatic step in sulfur assimilation pathway. APS synthesis involves the formation of a high-energy phosphoric-sulfuric acid anhydride bond driven by GTP hydrolysis by CysN coupled to ATP hydrolysis by CysD. The sequence is that of Sulfate adenylyltransferase subunit 2 from Shewanella sp. (strain ANA-3).